Reading from the N-terminus, the 610-residue chain is UvrABC system protein C (610 aa).

The GIY-YIG domain occupies 16 to 94; sequence SQPGVYRMYD…IKLYQPRYNV (79 aa). One can recognise a UVR domain in the interval 204–239; sequence QQVLTQLITRMEEASQQLHFEDAARIRDQIQAVRRV.

It belongs to the UvrC family. In terms of assembly, interacts with UvrB in an incision complex.

Its subcellular location is the cytoplasm. Functionally, the UvrABC repair system catalyzes the recognition and processing of DNA lesions. UvrC both incises the 5' and 3' sides of the lesion. The N-terminal half is responsible for the 3' incision and the C-terminal half is responsible for the 5' incision. This chain is UvrABC system protein C, found in Yersinia pseudotuberculosis serotype O:1b (strain IP 31758).